We begin with the raw amino-acid sequence, 139 residues long: Probable trafficking protein particle complex subunit 2 (139 aa).

It belongs to the TRAPP small subunits family. Sedlin subfamily. In terms of assembly, part of the multisubunit TRAPP (transport protein particle) complex.

Its subcellular location is the cytoplasm. The protein localises to the perinuclear region. The protein resides in the endoplasmic reticulum. It localises to the golgi apparatus. Its function is as follows. May play a role in vesicular transport from endoplasmic reticulum to Golgi. Involved in dsRNA uptake. The polypeptide is Probable trafficking protein particle complex subunit 2 (Drosophila melanogaster (Fruit fly)).